Reading from the N-terminus, the 146-residue chain is MRLHELRPKTNYKKSRKRKGRGMSSGLGKTAGRGHKGQNARTGGGVRPGFEGGQMPLQERLPKRGFTNAFKKEYAIVNVETLNDFEEGTEITPEVLLESKVIKGVKDGIKVLGKGEIDKKITVKAHKFSKQAKEKIEEAGGKVEVI.

Positions 1 to 62 (MRLHELRPKT…GQMPLQERLP (62 aa)) are disordered. Positions 10 to 21 (TNYKKSRKRKGR) are enriched in basic residues. Positions 42–52 (TGGGVRPGFEG) are enriched in gly residues.

Belongs to the universal ribosomal protein uL15 family. As to quaternary structure, part of the 50S ribosomal subunit.

Its function is as follows. Binds to the 23S rRNA. This is Large ribosomal subunit protein uL15 from Natranaerobius thermophilus (strain ATCC BAA-1301 / DSM 18059 / JW/NM-WN-LF).